The following is a 701-amino-acid chain: DNA-directed RNA polymerase subunit beta' (701 aa).

The Zn(2+) site is built by C76, C78, C94, and C97. The Mg(2+) site is built by D511, D513, and D515.

The protein belongs to the RNA polymerase beta' chain family. RpoC1 subfamily. In plastids the minimal PEP RNA polymerase catalytic core is composed of four subunits: alpha, beta, beta', and beta''. When a (nuclear-encoded) sigma factor is associated with the core the holoenzyme is formed, which can initiate transcription. The cofactor is Mg(2+). Requires Zn(2+) as cofactor.

The protein localises to the plastid. The protein resides in the chloroplast. It catalyses the reaction RNA(n) + a ribonucleoside 5'-triphosphate = RNA(n+1) + diphosphate. In terms of biological role, DNA-dependent RNA polymerase catalyzes the transcription of DNA into RNA using the four ribonucleoside triphosphates as substrates. This chain is DNA-directed RNA polymerase subunit beta', found in Pelargonium hortorum (Common geranium).